The following is a 421-amino-acid chain: F-box only protein 5 (421 aa).

Serine 85 carries the phosphoserine modification. Positions 114 to 219 (ELEASRLYED…IGKKMGLEHL (106 aa)) are interaction with EVI5. Positions 223–273 (AELSRRGFVHLLANILTKLSGMDLVNLSKVSRIWKKILENNKGAFQLYSKT) constitute an F-box domain. The segment at 236 to 313 (NILTKLSGMD…KSSTWAPPKK (78 aa)) is sufficient for interaction with RPS6KA2; Prevents association of CDC20 with RPS6KA2. A requires for efficient binding to CDC20 region spans residues 236-383 (NILTKLSGMD…SCQFEYCTKC (148 aa)). The tract at residues 280-421 (SSKLSLHATT…KKSKKNLQRL (142 aa)) is inhibits APC ubiquitin ligase activity. The interval 296 to 299 (RAAL) is competitively blocks access of APC substrates to the D-box coreceptor formed by FZR1 and ANAPC10. The segment at 348-396 (SLKACVRCNFPAKYDHYLERAVCKRESCQFEYCTKCLCAYHNNKDCLNG) adopts a ZBR-type zinc-finger fold. Residues cysteine 352, cysteine 355, cysteine 370, cysteine 375, cysteine 380, cysteine 383, histidine 388, and cysteine 393 each coordinate Zn(2+). Positions 352–394 (CVRCNFPAKYDHYLERAVCKRESCQFEYCTKCLCAYHNNKDCL) are allows a rapid multiple mono-ubiquitination of the APC substrate, but strongly inhibits the slow ubiquitin chain elongation catalyzed by UBCH10. The interval 411-421 (TKKSKKNLQRL) is sufficient to suppress UBE2S activity; essential for interaction with UBE2S; competitively inhibits the rapide ubiquitin chain elongation by UBE2D1 which blocks UBE2D1 with APC; indispensable for recruitment and position of FBXO5 to the catalytic site of APC; abrogates the inhibition of ubiquitin chain assembly primarily catalyzed by UBE2S; inhibits the ubiquitination by either UBE2C or UBE2D1.

As to quaternary structure, part of a SCF (SKP1-cullin-F-box) protein ligase complex. Interacts with BTRC; mediates proteolysis by the SCF ubiquitin ligase complex leading to activation of APC in late mitosis and subsequent mitotic progression. Interacts with FZR1/CDH1 and the N-terminal substrate-binding domain of CDC20; prevents APC activation. Also interacts with EVI5 which blocks its phosphorylation by PLK1 and prevents its subsequent binding to BTRC and degradation. Interacts simultaneously with anaphase promoting complex (APC), through at least ANAPC2, CDC23, CDC27, the APC substrate GMNN and the APC activator FZR1. Interacts with UBE2S; interferes with the activity of UBE2S mainly by disrupting the dynamic electrostatic association between the C-terminal tail of UBE2S and ANAPC2. Interacts with RPS6KA2; cooperates to induce the metaphase arrest of early blastomeres; increases and stabilizes interaction of FBXO5 with CDC20. In terms of processing, phosphorylation by CDK2 and subsequently by PLK1 triggers degradation during early mitosis through ubiquitin-mediated proteolysis by the SCF ubiquitin ligase complex containing the F-box protein BTRC. This degradation is necessary for the activation of APC in late mitosis and subsequent mitotic progression. Phosphorylated by RPS6KA2; increases and stabilizes interaction with CDC20. Ubiquitinated by the SCF(BTRC) complex following phosphorylation by PLK1. Undergoes both 'Lys-11' and 'Lys-48'-linked polyubiquitination by APC-FZR1 complex leading to degradation during G1 phase by the proteasome. Degraded through the SCF(BTRC) complex; degradation occurs during oocyte maturation, between germinal vesicle breakdown (GVBD) and meiosis I, and is required for the meiosis I-meiosis II transition. Expressed in oocytes and granulosa cells. Expressed in proliferating cells compartments in hair follicle and skin epidermis, spermatogonia, and intestinal crypts.

It localises to the nucleus. Its subcellular location is the cytoplasm. The protein resides in the cytoskeleton. It is found in the spindle. The protein operates within protein modification; protein ubiquitination. Its function is as follows. Regulator of APC activity during mitotic and meiotic cell cycle. During mitotic cell cycle plays a role as both substrate and inhibitor of APC-FZR1 complex. During G1 phase, plays a role as substrate of APC-FZR1 complex E3 ligase. Then switches as an inhibitor of APC-FZR1 complex during S and G2 leading to cell-cycle commitment. As APC inhibitor, prevents the degradation of APC substrates at multiple levels: by interacting with APC and blocking access of APC substrates to the D-box co-receptor, formed by FZR1 and ANAPC10; by suppressing ubiquitin ligation and chain elongation by APC by preventing the UBE2C and UBE2S activities. Plays a role in genome integrity preservation by coordinating DNA replication with mitosis through APC inhibition in interphase to stabilize CCNA2 and GMNN in order to promote mitosis and prevent rereplication and DNA damage-induced cellular senescence. During oocyte maturation, plays a role in meiosis through inactivation of APC-FZR1 complex. Inhibits APC through RPS6KA2 interaction that increases FBXO5 affiniy for CDC20 leading to the metaphase arrest of the second meiotic division before fertilization. Controls entry into the first meiotic division through inactivation of APC-FZR1 complex. Promotes migration and osteogenic differentiation of mesenchymal stem cells. The chain is F-box only protein 5 from Mus musculus (Mouse).